The chain runs to 171 residues: MAAVAAATTSFSFKDFFKSFMLVELVKGMALTGRYAFRRKVTVQFPEEKTPLSPRFRGLHALRRYENGEERCIACKLCEAVCPALAITIESDVRADGSRRTTRYDIDLTKCIFCGFCEESCPVDSIVETQILEYHGEKRGDLYFTKDMLLAVGDRYEAEIAAAKAADAKYR.

2 consecutive 4Fe-4S ferredoxin-type domains span residues 63–92 (RRYE…IESD) and 102–131 (TRYD…ETQI). [4Fe-4S] cluster is bound by residues Cys72, Cys75, Cys78, Cys82, Cys111, Cys114, Cys117, and Cys121.

This sequence belongs to the complex I 23 kDa subunit family. In terms of assembly, NDH-1 is composed of 14 different subunits. Subunits NuoA, H, J, K, L, M, N constitute the membrane sector of the complex. [4Fe-4S] cluster is required as a cofactor.

It is found in the cell inner membrane. The enzyme catalyses a quinone + NADH + 5 H(+)(in) = a quinol + NAD(+) + 4 H(+)(out). In terms of biological role, NDH-1 shuttles electrons from NADH, via FMN and iron-sulfur (Fe-S) centers, to quinones in the respiratory chain. The immediate electron acceptor for the enzyme in this species is believed to be ubiquinone. Couples the redox reaction to proton translocation (for every two electrons transferred, four hydrogen ions are translocated across the cytoplasmic membrane), and thus conserves the redox energy in a proton gradient. The sequence is that of NADH-quinone oxidoreductase subunit I from Paracidovorax citrulli (strain AAC00-1) (Acidovorax citrulli).